A 428-amino-acid chain; its full sequence is tRNA modification GTPase MnmE (428 aa).

Residues Arg-20, Glu-76, and Arg-116 each coordinate (6S)-5-formyl-5,6,7,8-tetrahydrofolate. Positions 212–351 (GFEVAIVGAP…LVAAIGERLL (140 aa)) constitute a TrmE-type G domain. A K(+)-binding site is contributed by Asn-222. GTP contacts are provided by residues 222 to 227 (NAGKST), 241 to 247 (SEIAGTT), and 266 to 269 (DTAG). Residue Ser-226 participates in Mg(2+) binding. K(+) is bound by residues Ser-241, Ile-243, and Thr-246. A Mg(2+)-binding site is contributed by Thr-247. Lys-428 contributes to the (6S)-5-formyl-5,6,7,8-tetrahydrofolate binding site.

Belongs to the TRAFAC class TrmE-Era-EngA-EngB-Septin-like GTPase superfamily. TrmE GTPase family. Homodimer. Heterotetramer of two MnmE and two MnmG subunits. The cofactor is K(+).

The protein resides in the cytoplasm. Its function is as follows. Exhibits a very high intrinsic GTPase hydrolysis rate. Involved in the addition of a carboxymethylaminomethyl (cmnm) group at the wobble position (U34) of certain tRNAs, forming tRNA-cmnm(5)s(2)U34. The protein is tRNA modification GTPase MnmE of Cereibacter sphaeroides (strain ATCC 17029 / ATH 2.4.9) (Rhodobacter sphaeroides).